Reading from the N-terminus, the 193-residue chain is Leucyl/phenylalanyl-tRNA--protein transferase (193 aa).

The protein belongs to the L/F-transferase family.

The protein resides in the cytoplasm. It catalyses the reaction N-terminal L-lysyl-[protein] + L-leucyl-tRNA(Leu) = N-terminal L-leucyl-L-lysyl-[protein] + tRNA(Leu) + H(+). The catalysed reaction is N-terminal L-arginyl-[protein] + L-leucyl-tRNA(Leu) = N-terminal L-leucyl-L-arginyl-[protein] + tRNA(Leu) + H(+). The enzyme catalyses L-phenylalanyl-tRNA(Phe) + an N-terminal L-alpha-aminoacyl-[protein] = an N-terminal L-phenylalanyl-L-alpha-aminoacyl-[protein] + tRNA(Phe). Its function is as follows. Functions in the N-end rule pathway of protein degradation where it conjugates Leu, Phe and, less efficiently, Met from aminoacyl-tRNAs to the N-termini of proteins containing an N-terminal arginine or lysine. In Akkermansia muciniphila (strain ATCC BAA-835 / DSM 22959 / JCM 33894 / BCRC 81048 / CCUG 64013 / CIP 107961 / Muc), this protein is Leucyl/phenylalanyl-tRNA--protein transferase.